Reading from the N-terminus, the 273-residue chain is Large ribosomal subunit protein uL2 (273 aa).

The segment at 224 to 264 (AMNPVDHPHGGGEGRNFGKHPVTPWGIQTKGKKTRKNKRTD) is disordered. Positions 253-264 (KGKKTRKNKRTD) are enriched in basic residues.

Belongs to the universal ribosomal protein uL2 family. In terms of assembly, part of the 50S ribosomal subunit. Forms a bridge to the 30S subunit in the 70S ribosome.

Functionally, one of the primary rRNA binding proteins. Required for association of the 30S and 50S subunits to form the 70S ribosome, for tRNA binding and peptide bond formation. It has been suggested to have peptidyltransferase activity; this is somewhat controversial. Makes several contacts with the 16S rRNA in the 70S ribosome. This is Large ribosomal subunit protein uL2 from Buchnera aphidicola subsp. Acyrthosiphon pisum (strain 5A).